Consider the following 278-residue polypeptide: 4-deoxy-L-threo-5-hexosulose-uronate ketol-isomerase (278 aa).

4 residues coordinate Zn(2+): His196, His198, Glu203, and His245.

The protein belongs to the KduI family. Homohexamer. Zn(2+) is required as a cofactor.

The enzyme catalyses 5-dehydro-4-deoxy-D-glucuronate = 3-deoxy-D-glycero-2,5-hexodiulosonate. It participates in glycan metabolism; pectin degradation; 2-dehydro-3-deoxy-D-gluconate from pectin: step 4/5. Functionally, catalyzes the isomerization of 5-dehydro-4-deoxy-D-glucuronate to 3-deoxy-D-glycero-2,5-hexodiulosonate. The sequence is that of 4-deoxy-L-threo-5-hexosulose-uronate ketol-isomerase from Escherichia coli O8 (strain IAI1).